The chain runs to 433 residues: Pyrimidine-nucleoside phosphorylase (433 aa).

Residue 81-83 participates in phosphate binding; the sequence is KHS. Residues Gly-88 and Thr-90 each contribute to the K(+) site. Phosphate is bound by residues Thr-92, 108–110, and Thr-120; that span reads KMS. Substrate-binding residues include Arg-168 and Lys-187. K(+) contacts are provided by Leu-243, Ala-246, and Glu-255.

It belongs to the thymidine/pyrimidine-nucleoside phosphorylase family. In terms of assembly, homodimer. It depends on K(+) as a cofactor.

The enzyme catalyses uridine + phosphate = alpha-D-ribose 1-phosphate + uracil. It carries out the reaction thymidine + phosphate = 2-deoxy-alpha-D-ribose 1-phosphate + thymine. The catalysed reaction is 2'-deoxyuridine + phosphate = 2-deoxy-alpha-D-ribose 1-phosphate + uracil. Functionally, catalyzes phosphorolysis of the pyrimidine nucleosides uridine, thymidine and 2'-deoxyuridine with the formation of the corresponding pyrimidine base and ribose-1-phosphate. This is Pyrimidine-nucleoside phosphorylase (pdp) from Staphylococcus epidermidis (strain ATCC 12228 / FDA PCI 1200).